We begin with the raw amino-acid sequence, 345 residues long: Protein RecA (345 aa).

Position 66–73 (66–73 (GPESSGKT)) interacts with ATP.

Belongs to the RecA family.

It is found in the cytoplasm. Functionally, can catalyze the hydrolysis of ATP in the presence of single-stranded DNA, the ATP-dependent uptake of single-stranded DNA by duplex DNA, and the ATP-dependent hybridization of homologous single-stranded DNAs. It interacts with LexA causing its activation and leading to its autocatalytic cleavage. This chain is Protein RecA, found in Frankia casuarinae (strain DSM 45818 / CECT 9043 / HFP020203 / CcI3).